The primary structure comprises 64 residues: MPKMKSHRGASKRFKRTASGKLKRSHAYTSHLFANKSTKAKRKLRKGAIVSAGDFKRIRNMIAK.

Basic residues predominate over residues 1–26; that stretch reads MPKMKSHRGASKRFKRTASGKLKRSH. The segment at 1–42 is disordered; it reads MPKMKSHRGASKRFKRTASGKLKRSHAYTSHLFANKSTKAKR.

It belongs to the bacterial ribosomal protein bL35 family.

In Exiguobacterium sp. (strain ATCC BAA-1283 / AT1b), this protein is Large ribosomal subunit protein bL35.